The sequence spans 456 residues: Bacteriochlorophyllide d C-12(1)-methyltransferase (456 aa).

One can recognise a Radical SAM core domain in the interval 178–405 (HAKKYSQLIP…MFEPKKLGGE (228 aa)). The [4Fe-4S] cluster site is built by Cys-194, Cys-198, and Cys-201.

Belongs to the radical SAM superfamily. It depends on [4Fe-4S] cluster as a cofactor.

It is found in the cytoplasm. It carries out the reaction 8-ethyl-12-methyl-3-vinylbacteriochlorophyllide d + S-adenosyl-L-methionine = 8,12-diethyl-3-vinylbacteriochlorophyllide d + S-adenosyl-L-homocysteine + H(+). The protein operates within porphyrin-containing compound metabolism; bacteriochlorophyll biosynthesis (light-independent). Its function is as follows. Involved in the biosynthesis of the major light-harvesting pigment bacteriochlorophyll c (BChlc), which confers a significant competitive advantage to green sulfur bacteria living at limiting red and near-infrared light intensities. BchR is a methyltransferase that adds a single methyl group to the methyl carbon at the C-12(1) position of 8-ethyl-12-methyl-3-vinylbacteriochlorophyllide d to yield 8,12-diethyl-3-vinylbacteriochlorophyllide d. The sequence is that of Bacteriochlorophyllide d C-12(1)-methyltransferase from Chlorobaculum tepidum (strain ATCC 49652 / DSM 12025 / NBRC 103806 / TLS) (Chlorobium tepidum).